Reading from the N-terminus, the 316-residue chain is uncharacterized protein (316 aa).

4 helical membrane-spanning segments follow: residues 74–94 (IPVLGLLTVLPLGLFIFGMAI), 99–119 (WPYAALLVFLLFLFTLLIFLG), 166–186 (MAGCAVPFFAGVGTLLGTVLG), and 188–208 (VEGFVGAVPGAAIGAMAGYIF).

It localises to the cell membrane. This is an uncharacterized protein from Synechocystis sp. (strain ATCC 27184 / PCC 6803 / Kazusa).